The sequence spans 71 residues: Sodium channel neurotoxin MeuNaTxalpha-12 (71 aa).

The N-terminal stretch at 1 to 6 is a signal peptide; it reads MTGVES. The LCN-type CS-alpha/beta domain occupies 8–70; the sequence is RDAYIAQGNN…VPIRIQGKCQ (63 aa). Intrachain disulfides connect Cys18-Cys69, Cys22-Cys42, Cys28-Cys52, and Cys32-Cys54. A propeptide (removed by a carboxypeptidase) is located at residue Arg71.

Belongs to the long (4 C-C) scorpion toxin superfamily. Sodium channel inhibitor family. Alpha subfamily. In terms of tissue distribution, expressed by the venom gland.

Its subcellular location is the secreted. Functionally, alpha toxins bind voltage-independently at site-3 of sodium channels (Nav) and inhibit the inactivation of the activated channels, thereby blocking neuronal transmission. The sequence is that of Sodium channel neurotoxin MeuNaTxalpha-12 from Mesobuthus eupeus (Lesser Asian scorpion).